The primary structure comprises 146 residues: Keratin-associated protein 12-2 (146 aa).

23 repeat units span residues 10 to 14 (CQPAC), 15 to 19 (CAPSP), 20 to 24 (CQPAC), 25 to 29 (CVPSS), 34 to 38 (CCVPV), 40 to 44 (CQSSV), 45 to 49 (CVPVS), 55 to 59 (CLPVS), 60 to 64 (CQSSV), 65 to 69 (CVPMS), 70 to 74 (FKSAV), 75 to 79 (CVPVS), 80 to 84 (CQSSV), 85 to 89 (CVPVS), 90 to 94 (CRPIV), 95 to 99 (CAAPS), 100 to 104 (CQSSL), 105 to 109 (CVPVS), 110 to 114 (CRPVV), 120 to 124 (CQSSG), 125 to 129 (CCQPS), 130 to 134 (CTSVL), and 135 to 139 (CRPIS). Residues 10-139 (CQPACCAPSP…CTSVLCRPIS (130 aa)) are 23 X 5 AA approximate repeats.

Belongs to the KRTAP type 12 family. Interacts with hair keratins. Restricted to a narrow region of the hair fiber cuticle, lying approximately 20 cell layers above the apex of the dermal papilla of the hair root; not detected in any other tissues.

Its function is as follows. In the hair cortex, hair keratin intermediate filaments are embedded in an interfilamentous matrix, consisting of hair keratin-associated proteins (KRTAP), which are essential for the formation of a rigid and resistant hair shaft through their extensive disulfide bond cross-linking with abundant cysteine residues of hair keratins. The matrix proteins include the high-sulfur and high-glycine-tyrosine keratins. The sequence is that of Keratin-associated protein 12-2 (KRTAP12-2) from Homo sapiens (Human).